Reading from the N-terminus, the 325-residue chain is AFLMTKDAEISIEVSPRYINGDYFLRGRKLGFNRISFGVQDFDPQVQLAVNRVQRETMFFQVMEWIRAAEFESVNIDLIYGLPYQTVQSFEATIAKTLRLDPDRIAVFNFAYLPNLKPIQKRIDPTTLPDSATKLTILQRVIERLTSQGYRYIGMDHFAKPTDELAIAQRSGDLKRNFQGYTTLPTADLIGFGLTSISMLQAAYAQNQKHLATYFSDVAAGHHGPQECGFNCTVEDLLRRTIIMELMCQFSLDKGAIARQFNLDFDAYFASELAALRELAADGLLHLGRDRLEVTPVGRLLIRNITAVFDAYLQQKSGRTFSKAI.

In terms of domain architecture, Radical SAM core spans 1–151 (AFLMTKDAEI…IERLTSQGYR (151 aa)). Positions 13, 40, 52, 77, 111, and 197 each coordinate S-adenosyl-L-methionine.

This sequence belongs to the anaerobic coproporphyrinogen-III oxidase family. As to quaternary structure, monomer. It depends on [4Fe-4S] cluster as a cofactor.

The protein localises to the cytoplasm. It carries out the reaction coproporphyrinogen III + 2 S-adenosyl-L-methionine = protoporphyrinogen IX + 2 5'-deoxyadenosine + 2 L-methionine + 2 CO2. Its pathway is porphyrin-containing compound metabolism; protoporphyrin-IX biosynthesis; protoporphyrinogen-IX from coproporphyrinogen-III (AdoMet route): step 1/1. In terms of biological role, involved in the heme and chlorophyll biosynthesis. Catalyzes the anaerobic oxidative decarboxylation of propionate groups of rings A and B of coproporphyrinogen III to yield the vinyl groups in protoporphyrinogen IX. This Thermostichus vulcanus (Synechococcus vulcanus) protein is Oxygen-independent coproporphyrinogen III oxidase (hemN).